The sequence spans 349 residues: tRNA pseudouridine synthase D (349 aa).

Position 27 (phenylalanine 27) interacts with substrate. Catalysis depends on aspartate 80, which acts as the Nucleophile. Residue asparagine 129 coordinates substrate. Residues 155-303 (GVPNYFGAQR…VEAARRAMLL (149 aa)) enclose the TRUD domain. Position 329 (phenylalanine 329) interacts with substrate.

This sequence belongs to the pseudouridine synthase TruD family.

It carries out the reaction uridine(13) in tRNA = pseudouridine(13) in tRNA. Functionally, responsible for synthesis of pseudouridine from uracil-13 in transfer RNAs. This is tRNA pseudouridine synthase D from Escherichia coli O8 (strain IAI1).